Reading from the N-terminus, the 174-residue chain is ATP-dependent protease subunit HslV (174 aa).

T2 is a catalytic residue. Positions 157, 160, and 163 each coordinate Na(+).

This sequence belongs to the peptidase T1B family. HslV subfamily. In terms of assembly, a double ring-shaped homohexamer of HslV is capped on each side by a ring-shaped HslU homohexamer. The assembly of the HslU/HslV complex is dependent on binding of ATP.

It is found in the cytoplasm. It catalyses the reaction ATP-dependent cleavage of peptide bonds with broad specificity.. Its activity is regulated as follows. Allosterically activated by HslU binding. Functionally, protease subunit of a proteasome-like degradation complex believed to be a general protein degrading machinery. The chain is ATP-dependent protease subunit HslV from Yersinia enterocolitica serotype O:8 / biotype 1B (strain NCTC 13174 / 8081).